Consider the following 600-residue polypeptide: Elongation factor 4 (600 aa).

A tr-type G domain is found at 4-186; sequence SKIRNFSIIA…EIVKKIPAPQ (183 aa). Residues 16–21 and 133–136 contribute to the GTP site; these read DHGKST and NKID.

Belongs to the TRAFAC class translation factor GTPase superfamily. Classic translation factor GTPase family. LepA subfamily.

It is found in the cell inner membrane. It catalyses the reaction GTP + H2O = GDP + phosphate + H(+). Its function is as follows. Required for accurate and efficient protein synthesis under certain stress conditions. May act as a fidelity factor of the translation reaction, by catalyzing a one-codon backward translocation of tRNAs on improperly translocated ribosomes. Back-translocation proceeds from a post-translocation (POST) complex to a pre-translocation (PRE) complex, thus giving elongation factor G a second chance to translocate the tRNAs correctly. Binds to ribosomes in a GTP-dependent manner. The protein is Elongation factor 4 of Trichlorobacter lovleyi (strain ATCC BAA-1151 / DSM 17278 / SZ) (Geobacter lovleyi).